A 175-amino-acid polypeptide reads, in one-letter code: Bifunctional protein PyrR (175 aa).

Substrate is bound by residues 40-41 (TR), 102-110 (DDVLYTGRT), arginine 135, and valine 159. Positions 98-110 (VIIIDDVLYTGRT) match the PRPP-binding motif.

Belongs to the purine/pyrimidine phosphoribosyltransferase family. PyrR subfamily. As to quaternary structure, homodimer and homohexamer; in equilibrium.

It carries out the reaction UMP + diphosphate = 5-phospho-alpha-D-ribose 1-diphosphate + uracil. Functionally, regulates transcriptional attenuation of the pyrimidine nucleotide (pyr) operon by binding in a uridine-dependent manner to specific sites on pyr mRNA. This disrupts an antiterminator hairpin in the RNA and favors formation of a downstream transcription terminator, leading to a reduced expression of downstream genes. In terms of biological role, also displays a weak uracil phosphoribosyltransferase activity which is not physiologically significant. The protein is Bifunctional protein PyrR of Staphylococcus haemolyticus (strain JCSC1435).